The following is a 491-amino-acid chain: Feruloyl-CoA synthase (491 aa).

Thr154 contributes to the Mg(2+) binding site. Residues Ala199, Gly291, and Thr295 each contribute to the ATP site. Glu296 lines the Mg(2+) pocket. Asp374 and Lys391 together coordinate ATP.

This sequence belongs to the ATP-dependent AMP-binding enzyme family. Mg(2+) is required as a cofactor.

The catalysed reaction is (E)-ferulate + ATP + CoA = (E)-feruloyl-CoA + AMP + diphosphate. Its function is as follows. Catalyzes the formation of (E)-feruloyl-CoA, AMP and diphosphate from (E)-ferulate, CoA and ATP. Involved in the degradation pathway of lignin-derived aromatic compounds of plant cell walls. Catalyzes the first enzymatic step in the conversion of ferulic acid into high value compound vanillin. The polypeptide is Feruloyl-CoA synthase (Amycolatopsis sp).